The sequence spans 397 residues: Subtilisin-like protease 3 (397 aa).

The N-terminal stretch at 1 to 19 (MGCIKVISVFLAAIAAVDA) is a signal peptide. Residues 20–116 (RAFFHNRGGN…VEHDRVVKLA (97 aa)) constitute a propeptide that is removed on maturation. The Inhibitor I9 domain maps to 35-116 (SYIVVMKDGV…VEHDRVVKLA (82 aa)). The Peptidase S8 domain occupies 126 to 397 (TWGLGRVSHK…NRLLYNGSGR (272 aa)). Residues aspartate 158 and histidine 189 each act as charge relay system in the active site. Residue asparagine 250 is glycosylated (N-linked (GlcNAc...) asparagine). Serine 344 serves as the catalytic Charge relay system. N-linked (GlcNAc...) asparagine glycosylation is present at asparagine 393.

It belongs to the peptidase S8 family.

Its subcellular location is the secreted. In terms of biological role, secreted subtilisin-like serine protease with keratinolytic activity that contributes to pathogenicity. This chain is Subtilisin-like protease 3 (SUB3), found in Arthroderma benhamiae (strain ATCC MYA-4681 / CBS 112371) (Trichophyton mentagrophytes).